The primary structure comprises 210 residues: Probable septum site-determining protein MinC (210 aa).

It belongs to the MinC family. In terms of assembly, interacts with MinD and FtsZ.

Its function is as follows. Cell division inhibitor that blocks the formation of polar Z ring septums. Rapidly oscillates between the poles of the cell to destabilize FtsZ filaments that have formed before they mature into polar Z rings. Prevents FtsZ polymerization. This Clostridium novyi (strain NT) protein is Probable septum site-determining protein MinC.